The sequence spans 531 residues: SWI/SNF-related matrix-associated actin-dependent regulator of chromatin subfamily D member 2 (531 aa).

Residues 20-85 form a disordered region; it reads AVAAALGAPP…MSPGSRMPMA (66 aa). The segment covering 34-45 has biased composition (low complexity); that stretch reads PGMLPSPALRGP. Asymmetric dimethylarginine is present on residues R81 and R104. Position 203 is a phosphoserine (S203). Positions 205–226 are disordered; it reads SKADGDNAGTAGTPGGTPAADK. Positions 210-225 are enriched in low complexity; that stretch reads DNAGTAGTPGGTPAAD. T217 bears the Phosphothreonine mark. K226 participates in a covalent cross-link: Glycyl lysine isopeptide (Lys-Gly) (interchain with G-Cter in SUMO2). The region spanning 306-383 is the SWIB/MDM2 domain; it reads HQPPQYKLDP…PMKLAGLLQH (78 aa).

Belongs to the SMARCD family. In terms of assembly, component of the multiprotein chromatin-remodeling complexes SWI/SNF: SWI/SNF-A (BAF), SWI/SNF-B (PBAF) and related complexes. The canonical complex contains a catalytic subunit (either SMARCA4/BRG1/BAF190A or SMARCA2/BRM/BAF190B), and at least SMARCE1, ACTL6A/BAF53, SMARCC1/BAF155, SMARCC2/BAF170, and SMARCB1/SNF5/BAF47. Other subunits specific to each of the complexes may also be present permitting several possible combinations developmentally and tissue specific. Component of the BAF complex, which includes at least actin (ACTB), ARID1A/BAF250A, ARID1B/BAF250B, SMARCA2/BRM, SMARCA4/BRG1, ACTL6A/BAF53, ACTL6B/BAF53B, SMARCE1/BAF57, SMARCC1/BAF155, SMARCC2/BAF170, SMARCB1/SNF5/INI1, and one or more SMARCD1/BAF60A, SMARCD2/BAF60B, or SMARCD3/BAF60C. In muscle cells, the BAF complex also contains DPF3. Component of the SWI/SNF-B (PBAF) chromatin remodeling complex, at least composed of SMARCA4/BRG1, SMARCB1/BAF47/SNF5, ACTL6A/BAF53A or ACTL6B/BAF53B, SMARCE1/BAF57, SMARCD1/BAF60A, SMARCD2/BAF60B, perhaps SMARCD3/BAF60C, SMARCC1/BAF155, SMARCC2/BAF170, PBRM1/BAF180, ARID2/BAF200 and actin (ACTB). Interacts with UNKL. Interacts with CEBPE. In terms of processing, ubiquitinated through a signaling process involving RAC1 and the RING finger protein UNKL.

The protein localises to the nucleus. In terms of biological role, involved in transcriptional activation and repression of select genes by chromatin remodeling (alteration of DNA-nucleosome topology). Component of SWI/SNF chromatin remodeling complexes that carry out key enzymatic activities, changing chromatin structure by altering DNA-histone contacts within a nucleosome in an ATP-dependent manner. Critical regulator of myeloid differentiation, controlling granulocytopoiesis and the expression of genes involved in neutrophil granule formation. The protein is SWI/SNF-related matrix-associated actin-dependent regulator of chromatin subfamily D member 2 (Smarcd2) of Mus musculus (Mouse).